We begin with the raw amino-acid sequence, 417 residues long: UDP-N-acetylglucosamine 1-carboxyvinyltransferase (417 aa).

Phosphoenolpyruvate is bound at residue Lys-22 to Asn-23. Arg-92 serves as a coordination point for UDP-N-acetyl-alpha-D-glucosamine. The active-site Proton donor is Cys-116. Cys-116 bears the 2-(S-cysteinyl)pyruvic acid O-phosphothioketal mark. Positions 304 and 326 each coordinate UDP-N-acetyl-alpha-D-glucosamine.

This sequence belongs to the EPSP synthase family. MurA subfamily.

It is found in the cytoplasm. The enzyme catalyses phosphoenolpyruvate + UDP-N-acetyl-alpha-D-glucosamine = UDP-N-acetyl-3-O-(1-carboxyvinyl)-alpha-D-glucosamine + phosphate. It participates in cell wall biogenesis; peptidoglycan biosynthesis. Cell wall formation. Adds enolpyruvyl to UDP-N-acetylglucosamine. The sequence is that of UDP-N-acetylglucosamine 1-carboxyvinyltransferase from Geobacter metallireducens (strain ATCC 53774 / DSM 7210 / GS-15).